The primary structure comprises 194 residues: Ribonuclease HII (194 aa).

The region spanning 16 to 194 (CIVAGIDEAG…PYHRRSFRCC (179 aa)) is the RNase H type-2 domain. A divalent metal cation is bound by residues D22, E23, and D113.

It belongs to the RNase HII family. It depends on Mn(2+) as a cofactor. Mg(2+) is required as a cofactor.

It localises to the cytoplasm. The catalysed reaction is Endonucleolytic cleavage to 5'-phosphomonoester.. In terms of biological role, endonuclease that specifically degrades the RNA of RNA-DNA hybrids. The chain is Ribonuclease HII from Rickettsia massiliae (strain Mtu5).